Reading from the N-terminus, the 254-residue chain is uncharacterized protein (254 aa).

It belongs to the nucleoside-specific channel-forming outer membrane porin (Tsx) (TC 1.B.10) family.

This is an uncharacterized protein from Escherichia coli (strain K12).